A 189-amino-acid chain; its full sequence is Casparian strip membrane protein 1 (189 aa).

Residues 1–25 are Cytoplasmic-facing; that stretch reads MMQAESGSAEAKGPLPPPVGRKRRG. The chain crosses the membrane as a helical span at residues 26–46; the sequence is LGILDFLLRLLAIGATLSAAI. The Extracellular segment spans residues 47–73; it reads TMGTTNETLQFFTQFFQFKARFYDLSA. A glycan (N-linked (GlcNAc...) asparagine) is linked at asparagine 52. The chain crosses the membrane as a helical span at residues 74–94; that stretch reads FIYFVIANAIVGGYLLLSLPI. Topologically, residues 95–108 are cytoplasmic; that stretch reads SILNIVRPRAASSR. Residues 109–129 form a helical membrane-spanning segment; the sequence is VFLIFFDTVMVAVCTSGAAAA. Topologically, residues 130-158 are extracellular; sequence VAILYVARKGNSRTNWFAICQRFNSFCNQ. A helical transmembrane segment spans residues 159 to 179; it reads AIGAVSASFAGVVFLILLVLL. Residues 180-189 are Cytoplasmic-facing; sequence SASTLYRRRP.

Belongs to the Casparian strip membrane proteins (CASP) family. Homodimer and heterodimers.

It localises to the cell membrane. Its function is as follows. Regulates membrane-cell wall junctions and localized cell wall deposition. Required for establishment of the Casparian strip membrane domain (CSD) and the subsequent formation of Casparian strips, a cell wall modification of the root endodermis that determines an apoplastic barrier between the intraorganismal apoplasm and the extraorganismal apoplasm and prevents lateral diffusion. In Picea glauca (White spruce), this protein is Casparian strip membrane protein 1.